We begin with the raw amino-acid sequence, 538 residues long: Dolichol kinase (538 aa).

Topologically, residues 1-13 (MTRECPSPAPGPG) are lumenal. A helical transmembrane segment spans residues 14–34 (APLSGSVLAEAAVVFAVVLSI). Over 35–74 (HATVWDRYSWCAVALAVQAFYVQYKWDRLLQQGSAVFQFR) the chain is Cytoplasmic. Residues 75–95 (MSANSGLLPASMVMPLLGLVM) form a helical membrane-spanning segment. Topologically, residues 96–111 (KERCQTAGNPFFERFG) are lumenal. Residues 112 to 132 (IVVAATGMAVALFSSVLALGI) form a helical membrane-spanning segment. The Cytoplasmic segment spans residues 133 to 134 (TR). The helical transmembrane segment at 135 to 155 (PVPTNTCVILGLAGGVIIYIM) threads the bilayer. The Lumenal segment spans residues 156–163 (KHSLSVGE). Residues 164-184 (VIEVLEVLLIFVYLNMILLYL) form a helical membrane-spanning segment. The Cytoplasmic portion of the chain corresponds to 185 to 188 (LPRC). The chain crosses the membrane as a helical span at residues 189 to 209 (FTPGEALLVLGGISFVLNQLI). At 210–224 (KRSLTLVESQGDPVD) the chain is on the lumenal side. Residues 225 to 245 (FFLLVVVVGMVLMGIFFSTLF) form a helical membrane-spanning segment. Residues 246 to 254 (VFMDSGTWA) lie on the Cytoplasmic side of the membrane. The helical transmembrane segment at 255–275 (SSIFFHLMTCVLSLGVVLPWL) threads the bilayer. Residues 276–297 (HRLIRRNPLLWLLQFLFQTDTR) lie on the Lumenal side of the membrane. The helical transmembrane segment at 298–318 (IYLLAYWSLLATLACLVVLYQ) threads the bilayer. Residues 319-337 (NAKRSSSESKKHQAPTIAR) are Cytoplasmic-facing. A helical membrane pass occupies residues 338–354 (KYFHLIVVATYIPGIIF). The Lumenal segment spans residues 355–359 (DRPLL). Residues 360 to 380 (YVAATVCLAVFIFLEYVRYFR) traverse the membrane as a helical segment. The Cytoplasmic segment spans residues 381–401 (IKPLGHTLRSFLSLFLDERDS). A helical transmembrane segment spans residues 402–422 (GPLILTHIYLLLGMSLPIWLI). Topologically, residues 423 to 436 (PRPCTQKGSLGGAR) are lumenal. Residues 437-457 (ALVPYAGVLAVGVGDTVASIF) form a helical membrane-spanning segment. The Cytoplasmic portion of the chain corresponds to 458–472 (GSTMGEIRWPGTKKT). The segment at 459–474 (STMGEIRWPGTKKTFE) is CTP-binding. Residues 473-493 (FEGTMTSIFAQIISVALILIF) form a helical membrane-spanning segment. Over 494-495 (DS) the chain is Lumenal. Residues 496 to 516 (GVDLNYSYAWILGSISTVSLL) form a helical membrane-spanning segment. Residues 517 to 538 (EAYTTQIDNLLLPLYLLILLMA) are Cytoplasmic-facing.

Belongs to the polyprenol kinase family. Ubiquitous.

The protein localises to the endoplasmic reticulum membrane. The enzyme catalyses a di-trans,poly-cis-dolichol + CTP = a di-trans,poly-cis-dolichyl phosphate + CDP + H(+). Its pathway is protein modification; protein glycosylation. Functionally, catalyzes CTP-mediated phosphorylation of dolichol, the terminal step in de novo dolichyl monophosphate (Dol-P) biosynthesis. Dol-P is a lipid carrier essential for the synthesis of N-linked and O-linked oligosaccharides and for GPI anchors. This chain is Dolichol kinase (DOLK), found in Homo sapiens (Human).